A 414-amino-acid chain; its full sequence is MIOREX complex component 10 (414 aa).

A mitochondrion-targeting transit peptide spans 1–29; the sequence is MLSFRSLTSTFGFVSRFQIRRLGTSLSIQ. Residues 30 to 373 are Mitochondrial matrix-facing; it reads NLEVQDGRWK…ISLLNERNST (344 aa). Residues 374–394 traverse the membrane as a helical segment; sequence FLEWIIIYLIAFELCFEIYHF. Residues 395 to 414 are Mitochondrial intermembrane-facing; sequence YQKYSSYCSEPTNDDLDATK.

It belongs to the RMD1/sif2 family. In terms of assembly, associates with the mitochondrial ribosome.

It is found in the mitochondrion inner membrane. In terms of biological role, component of MIOREX complexes, large expressome-like assemblies of ribosomes with factors involved in all the steps of post-transcriptional gene expression. This is MIOREX complex component 10 from Saccharomyces cerevisiae (strain ATCC 204508 / S288c) (Baker's yeast).